A 279-amino-acid chain; its full sequence is Conserved oligomeric Golgi complex subunit 7 (279 aa).

Component of the conserved oligomeric Golgi (COG or Sec34/Sec35) complex which consists of eight different proteins COG1-COG8.

Its subcellular location is the golgi apparatus membrane. Functionally, acts as a component of the peripheral membrane COG complex that is involved in intra-Golgi protein trafficking. COG is located at the cis-Golgi, and regulates tethering of retrograde intra-Golgi vesicles and possibly a number of other membrane trafficking events. This Saccharomyces cerevisiae (strain ATCC 204508 / S288c) (Baker's yeast) protein is Conserved oligomeric Golgi complex subunit 7 (COG7).